Reading from the N-terminus, the 209-residue chain is MSSVAVIDYGMGNLRSVSKALEQVAGKVRIDVTSNPQRIRAADRVVFPGVGAIRDCMHELRRLNLDIVVAQCAADRPFLGICLGLQALLELSEENHGVPCLGILPGRVQRFDAVKADLKVPHMGWNQAHQVRAHPLWNAIPQNCRFYFVHSYYTVPDETSLVASRTDYSTSFASALARDNIFAVQFHPEKSHTFGLQLLANFLTWNGVS.

One can recognise a Glutamine amidotransferase type-1 domain in the interval 3 to 209; it reads SVAVIDYGMG…ANFLTWNGVS (207 aa). The active-site Nucleophile is Cys82. Active-site residues include His187 and Glu189.

As to quaternary structure, heterodimer of HisH and HisF.

It localises to the cytoplasm. The enzyme catalyses 5-[(5-phospho-1-deoxy-D-ribulos-1-ylimino)methylamino]-1-(5-phospho-beta-D-ribosyl)imidazole-4-carboxamide + L-glutamine = D-erythro-1-(imidazol-4-yl)glycerol 3-phosphate + 5-amino-1-(5-phospho-beta-D-ribosyl)imidazole-4-carboxamide + L-glutamate + H(+). It catalyses the reaction L-glutamine + H2O = L-glutamate + NH4(+). It participates in amino-acid biosynthesis; L-histidine biosynthesis; L-histidine from 5-phospho-alpha-D-ribose 1-diphosphate: step 5/9. In terms of biological role, IGPS catalyzes the conversion of PRFAR and glutamine to IGP, AICAR and glutamate. The HisH subunit catalyzes the hydrolysis of glutamine to glutamate and ammonia as part of the synthesis of IGP and AICAR. The resulting ammonia molecule is channeled to the active site of HisF. The polypeptide is Imidazole glycerol phosphate synthase subunit HisH (Nitrosococcus oceani (strain ATCC 19707 / BCRC 17464 / JCM 30415 / NCIMB 11848 / C-107)).